We begin with the raw amino-acid sequence, 1603 residues long: Vitellogenin-3 (1603 aa).

The first 15 residues, 1-15, serve as a signal peptide directing secretion; that stretch reads MKSIIIASLVALAIA. Residues 24–685 form the Vitellogenin domain; that stretch reads FSPKSEYVYK…EKNAFLPKEV (662 aa). N-linked (GlcNAc...) asparagine glycosylation occurs at Asn-1266. The 170-residue stretch at 1306-1475 folds into the VWFD domain; the sequence is ATCKVGQSEV…SYLLKNEECE (170 aa). 2 disulfide bridges follow: Cys-1308–Cys-1438 and Cys-1330–Cys-1474.

Expressed in the intestine of adult hermaphrodites.

The protein localises to the secreted. Functionally, precursor of the egg-yolk proteins that are sources of nutrients during embryonic development. Together with other vitellogenins, may play a role in modulating life-span, acting via induction of autophagy and lysosomal lipolysis. The chain is Vitellogenin-3 (vit-3) from Caenorhabditis elegans.